The following is a 255-amino-acid chain: Phycoerythrobilin:ferredoxin oxidoreductase (255 aa).

The protein belongs to the HY2 family.

It carries out the reaction (3Z)-phycoerythrobilin + oxidized 2[4Fe-4S]-[ferredoxin] = 15,16-dihydrobiliverdin + reduced 2[4Fe-4S]-[ferredoxin] + 2 H(+). Catalyzes the two-electron reduction of the C2 and C3(1) diene system of 15,16-dihydrobiliverdin. This chain is Phycoerythrobilin:ferredoxin oxidoreductase (pebB), found in Nostoc punctiforme (strain ATCC 29133 / PCC 73102).